The primary structure comprises 425 residues: Gamma-glutamyl phosphate reductase (425 aa).

It belongs to the gamma-glutamyl phosphate reductase family.

The protein resides in the cytoplasm. The enzyme catalyses L-glutamate 5-semialdehyde + phosphate + NADP(+) = L-glutamyl 5-phosphate + NADPH + H(+). The protein operates within amino-acid biosynthesis; L-proline biosynthesis; L-glutamate 5-semialdehyde from L-glutamate: step 2/2. Functionally, catalyzes the NADPH-dependent reduction of L-glutamate 5-phosphate into L-glutamate 5-semialdehyde and phosphate. The product spontaneously undergoes cyclization to form 1-pyrroline-5-carboxylate. The protein is Gamma-glutamyl phosphate reductase of Xylella fastidiosa (strain M23).